Here is a 278-residue protein sequence, read N- to C-terminus: Tyrosine-protein phosphatase pmp1 (278 aa).

Residues 60-214 (GPVCIYPPNI…LSEYQQIIRK (155 aa)) form the Tyrosine-protein phosphatase domain. Residue cysteine 158 is the Phosphocysteine intermediate of the active site. The interval 217-278 (SQGPYQSSSL…SSGSISNDAS (62 aa)) is disordered. Residues 252–278 (SPSTSESSMFTNLRRTRSSGSISNDAS) show a composition bias toward polar residues.

The protein belongs to the protein-tyrosine phosphatase family. Non-receptor class dual specificity subfamily.

The enzyme catalyses O-phospho-L-tyrosyl-[protein] + H2O = L-tyrosyl-[protein] + phosphate. In terms of biological role, dual specificity phosphatase that dephosphorylates MAP kinase pmk1 on a Tyr. Has a role in chloride ion homeostasis by inactivating this pmk1 MAP kinase pathway. This chain is Tyrosine-protein phosphatase pmp1 (pmp1), found in Schizosaccharomyces pombe (strain 972 / ATCC 24843) (Fission yeast).